The following is a 96-amino-acid chain: Copper-sensing transcriptional repressor RicR (96 aa).

T2 carries the N-acetylthreonine modification. Cu cation-binding residues include C38, H63, and C67.

The protein belongs to the CsoR family.

It is found in the cytoplasm. Functionally, under low copper conditions, represses the expression of lpqS, Rv2963, mymT, socA, socB, mmcO and its own expression. In the presence of copper, RicR dissociates from DNA, leading to the expression of the target genes. Members of the RicR regulon are important for copper resistance during infections and full virulence in a mouse model of infection. The protein is Copper-sensing transcriptional repressor RicR of Mycobacterium tuberculosis (strain ATCC 25618 / H37Rv).